Here is a 53-residue protein sequence, read N- to C-terminus: Sec-independent protein translocase protein TatA (53 aa).

The chain crosses the membrane as a helical span at residues 1–21 (MGMSFSHLLIVLLIIFVLFGA).

Belongs to the TatA/E family. The Tat system comprises two distinct complexes: a TatABC complex, containing multiple copies of TatA, TatB and TatC subunits, and a separate TatA complex, containing only TatA subunits. Substrates initially bind to the TatABC complex, which probably triggers association of the separate TatA complex to form the active translocon.

The protein localises to the cell inner membrane. Its function is as follows. Part of the twin-arginine translocation (Tat) system that transports large folded proteins containing a characteristic twin-arginine motif in their signal peptide across membranes. TatA could form the protein-conducting channel of the Tat system. This chain is Sec-independent protein translocase protein TatA, found in Rickettsia rickettsii (strain Iowa).